Reading from the N-terminus, the 256-residue chain is Tryptophan synthase alpha chain (256 aa).

Catalysis depends on proton acceptor residues Glu48 and Asp59.

This sequence belongs to the TrpA family. As to quaternary structure, tetramer of two alpha and two beta chains.

The catalysed reaction is (1S,2R)-1-C-(indol-3-yl)glycerol 3-phosphate + L-serine = D-glyceraldehyde 3-phosphate + L-tryptophan + H2O. The protein operates within amino-acid biosynthesis; L-tryptophan biosynthesis; L-tryptophan from chorismate: step 5/5. Its function is as follows. The alpha subunit is responsible for the aldol cleavage of indoleglycerol phosphate to indole and glyceraldehyde 3-phosphate. In Caldicellulosiruptor bescii (strain ATCC BAA-1888 / DSM 6725 / KCTC 15123 / Z-1320) (Anaerocellum thermophilum), this protein is Tryptophan synthase alpha chain.